A 202-amino-acid polypeptide reads, in one-letter code: 7-methyl-GTP pyrophosphatase (202 aa).

Asp70 functions as the Proton acceptor in the catalytic mechanism.

Belongs to the Maf family. YceF subfamily. A divalent metal cation serves as cofactor.

The protein resides in the cytoplasm. The catalysed reaction is N(7)-methyl-GTP + H2O = N(7)-methyl-GMP + diphosphate + H(+). Functionally, nucleoside triphosphate pyrophosphatase that hydrolyzes 7-methyl-GTP (m(7)GTP). May have a dual role in cell division arrest and in preventing the incorporation of modified nucleotides into cellular nucleic acids. This chain is 7-methyl-GTP pyrophosphatase, found in Pseudoalteromonas translucida (strain TAC 125).